The sequence spans 132 residues: Sec-independent protein translocase protein TatB (132 aa).

A helical membrane pass occupies residues 2–22 (FDGIGFMELLLIGILGLVVLG). Positions 68–132 (ENQGLKDLSP…VSANPDKSNR (65 aa)) are disordered. The span at 102–122 (TPSASSSAPSESTPSEAPTAE) shows a compositional bias: low complexity.

It belongs to the TatB family. In terms of assembly, the Tat system comprises two distinct complexes: a TatABC complex, containing multiple copies of TatA, TatB and TatC subunits, and a separate TatA complex, containing only TatA subunits. Substrates initially bind to the TatABC complex, which probably triggers association of the separate TatA complex to form the active translocon.

Its subcellular location is the cell inner membrane. Functionally, part of the twin-arginine translocation (Tat) system that transports large folded proteins containing a characteristic twin-arginine motif in their signal peptide across membranes. Together with TatC, TatB is part of a receptor directly interacting with Tat signal peptides. TatB may form an oligomeric binding site that transiently accommodates folded Tat precursor proteins before their translocation. This Shewanella woodyi (strain ATCC 51908 / MS32) protein is Sec-independent protein translocase protein TatB.